The sequence spans 542 residues: Aminotriazole resistance protein (542 aa).

Residues 1–108 (MGNQSLVVLT…SFGSEGNSKS (108 aa)) are Cytoplasmic-facing. A helical membrane pass occupies residues 109–129 (WLMASFPLVSGSFILISGRLG). Topologically, residues 130–136 (DIYGLKK) are extracellular. The helical transmembrane segment at 137 to 157 (MLLVGYVLVIIWSLICGITKY) threads the bilayer. Topologically, residues 158–172 (SGSDTFFIISRAFQG) are cytoplasmic. The helical transmembrane segment at 173–193 (LGIAFVLPNVLGIIGNIYVGG) threads the bilayer. Over 194 to 198 (TFRKN) the chain is Extracellular. Residues 199 to 219 (IVISFVGAMAPIGATLGCLFA) form a helical membrane-spanning segment. Residues 220–231 (GLIGTEDPKQWP) are Cytoplasmic-facing. The helical transmembrane segment at 232-252 (WAFYAYSIAAFINFVLSIYAI) threads the bilayer. Residues 253 to 262 (PSTIPTNIHH) lie on the Extracellular side of the membrane. Residues 263–283 (FSMDWIGSVLGVIGLILLNFV) form a helical membrane-spanning segment. Topologically, residues 284-295 (WNQAPISGWNQA) are cytoplasmic. Residues 296–316 (YIIVILIISVIFLVVFIIYEI) traverse the membrane as a helical segment. Over 317 to 333 (RFAKTPLLPRAVIKDRH) the chain is Extracellular. A helical transmembrane segment spans residues 334–354 (MIQIMLALFFGWGSFGIFTFY). The Cytoplasmic segment spans residues 355–371 (YFQFQLNIRQYTALWAG). The chain crosses the membrane as a helical span at residues 372 to 392 (GTYFMFLIWGIIAALLVGFTI). The Extracellular portion of the chain corresponds to 393–399 (KNVSPSV). A helical transmembrane segment spans residues 400 to 420 (FLFFSMVAFNVGSIMASVTPV). At 421–429 (HETYFRTQL) the chain is on the cytoplasmic side. Residues 430 to 450 (GTMIILSFGMDLSFPASSIIF) traverse the membrane as a helical segment. Over 451-505 (SDNLPMEYQGMAGSLVNTVVNYSMSLCLGMGATVETQVNSDGKHLLKGYRGAQYL) the chain is Extracellular. N-linked (GlcNAc...) asparagine glycosylation occurs at N471. The chain crosses the membrane as a helical span at residues 506 to 526 (GIGLASLACMISGLYMVESFI). The Cytoplasmic portion of the chain corresponds to 527 to 542 (KGRRARAAAEYDCTVA).

It belongs to the major facilitator superfamily.

It localises to the membrane. In terms of biological role, putative component of the machinery responsible for pumping aminotriazole (and possibly other toxic compounds) out of the cell. Probable ATP-dependent export permease. Appears to confer resistance only to aminotriazole. The sequence is that of Aminotriazole resistance protein (ATR1) from Saccharomyces cerevisiae (strain ATCC 204508 / S288c) (Baker's yeast).